The chain runs to 385 residues: Suppressor protein STP22 of temperature-sensitive alpha-factor receptor and arginine permease (385 aa).

In terms of domain architecture, UEV spans 12-161 (AVVNWLFKVI…LHEPPQDQAP (150 aa)). The tract at residues 155-219 (PPQDQAPSLP…DMDNTDISPT (65 aa)) is disordered. A compositionally biased stretch (polar residues) spans 168 to 177 (NTQLQQEQNT). Positions 178 to 201 (PPLPPKPKSPHLKPPLPPPPPPQP) are enriched in pro residues. Positions 272–300 (LRAVEQAIEQTMHSLNAQIDVLTANRAKV) form a coiled coil. Residues 322–385 (TDGLNQLYNL…HIQRITSPLS (64 aa)) form the SB domain.

This sequence belongs to the ubiquitin-conjugating enzyme family. UEV subfamily. Component of the ESCRT-I complex (endosomal sorting complex required for transport I) which consists of STP22, VPS28, SRN2 and MVB12 in a 1:1:1:1 stoichiometry. Interacts with HSE1 and VPS27. Interacts with MVB12 and SRN2.

The protein localises to the cytoplasm. It is found in the endosome. Its subcellular location is the late endosome membrane. Functionally, component of the ESCRT-I complex, a regulator of vesicular trafficking process. Binds to ubiquitinated cargo proteins and is required for the sorting of endocytic ubiquitinated cargos into multivesicular bodies (MVBs). Mediates the association to the ESCRT-0 complex. Required for vacuolar targeting of temperature-sensitive plasma membrane proteins STE2 and CAN1. This is Suppressor protein STP22 of temperature-sensitive alpha-factor receptor and arginine permease (STP22) from Saccharomyces cerevisiae (strain ATCC 204508 / S288c) (Baker's yeast).